Consider the following 397-residue polypeptide: Glycine betaine/carnitine transport ATP-binding protein GbuA (397 aa).

One can recognise an ABC transporter domain in the interval 28–264; it reads KSKTDILKET…PANEYVEKFI (237 aa). 60-67 contacts ATP; sequence GLSGSGKS. 2 consecutive CBS domains span residues 279-335 and 340-395; these read MIRP…NITS and LHRD…EVNV.

It belongs to the ABC transporter superfamily. In terms of assembly, the complex is composed of two ATP-binding proteins (GbuA), two transmembrane proteins (GbuB) and a solute-binding protein (GbuC).

The catalysed reaction is a quaternary ammonium(out) + ATP + H2O = a quaternary ammonium(in) + ADP + phosphate + H(+). The complex is activated by an osmotic gradient or by low temperature. Its function is as follows. Part of the ABC transporter complex GbuABC involved in glycine betaine uptake. Responsible for energy coupling to the transport system. Involved, with BetL and OpuC, in osmoprotection and cryoprotection of Listeria. Can also uptake carnitine when carnitine is abundant in the growth medium. This is Glycine betaine/carnitine transport ATP-binding protein GbuA (gbuA) from Listeria monocytogenes serotype 1/2a (strain 10403S).